The following is an 854-amino-acid chain: Lysine-specific demethylase 3 (854 aa).

The disordered stretch occupies residues 64-88 (QRVQQEEESLGQVPPLTEEEQQRHD). Residues 601 to 806 (LRTGNLNIAS…HCYHLTHEFR (206 aa)) form the JmjC domain. Fe cation-binding residues include H643, D645, and H774.

It belongs to the JHDM2-like histone demethylase family. Fe(2+) serves as cofactor. Expressed in neurons close to the dorsal lateral neurons involved in circadian rhythm.

It localises to the nucleus. Its subcellular location is the cytoplasm. It catalyses the reaction N(6),N(6)-dimethyl-L-lysyl(9)-[histone H3] + 2 2-oxoglutarate + 2 O2 = L-lysyl(9)-[histone H3] + 2 formaldehyde + 2 succinate + 2 CO2. Histone demethylase that specifically demethylates 'Lys-10' of histone H3 (H3K9), thereby playing a central role in histone code. Demethylation of Lys residue generates formaldehyde and succinate. Probably involved in regulation of chromatin structure, promoting expansion of euchromatin. Negatively regulates rhino-dependent piRNA production capacity of several genomic regions; may help define the frontiers of piRNA clusters by regulating histone methylation levels. May be involved in regulation of behavior and circadian rhythms. The protein is Lysine-specific demethylase 3 of Drosophila melanogaster (Fruit fly).